The chain runs to 1385 residues: DNA-directed RNA polymerase subunit beta' (1385 aa).

Residues Cys72, Cys74, Cys87, and Cys90 each coordinate Zn(2+). Mg(2+) contacts are provided by Asp463, Asp465, and Asp467. Zn(2+) is bound by residues Cys813, Cys887, Cys894, and Cys897.

It belongs to the RNA polymerase beta' chain family. As to quaternary structure, the RNAP catalytic core consists of 2 alpha, 1 beta, 1 beta' and 1 omega subunit. When a sigma factor is associated with the core the holoenzyme is formed, which can initiate transcription. The cofactor is Mg(2+). Zn(2+) is required as a cofactor.

It carries out the reaction RNA(n) + a ribonucleoside 5'-triphosphate = RNA(n+1) + diphosphate. DNA-dependent RNA polymerase catalyzes the transcription of DNA into RNA using the four ribonucleoside triphosphates as substrates. This is DNA-directed RNA polymerase subunit beta' from Trichlorobacter lovleyi (strain ATCC BAA-1151 / DSM 17278 / SZ) (Geobacter lovleyi).